Consider the following 1034-residue polypeptide: Isoleucine--tRNA ligase (1034 aa).

Positions 48 to 58 match the 'HIGH' region motif; the sequence is PTANGKPHIGH. The short motif at 588–592 is the 'KMSKS' region element; that stretch reads KMSKH. Residue K591 participates in ATP binding.

This sequence belongs to the class-I aminoacyl-tRNA synthetase family. IleS type 2 subfamily. As to quaternary structure, monomer. Zn(2+) serves as cofactor.

Its subcellular location is the cytoplasm. It catalyses the reaction tRNA(Ile) + L-isoleucine + ATP = L-isoleucyl-tRNA(Ile) + AMP + diphosphate. Its function is as follows. Catalyzes the attachment of isoleucine to tRNA(Ile). As IleRS can inadvertently accommodate and process structurally similar amino acids such as valine, to avoid such errors it has two additional distinct tRNA(Ile)-dependent editing activities. One activity is designated as 'pretransfer' editing and involves the hydrolysis of activated Val-AMP. The other activity is designated 'posttransfer' editing and involves deacylation of mischarged Val-tRNA(Ile). This Clostridium kluyveri (strain ATCC 8527 / DSM 555 / NBRC 12016 / NCIMB 10680 / K1) protein is Isoleucine--tRNA ligase.